The sequence spans 259 residues: 5'-nucleotidase SurE (259 aa).

4 residues coordinate a divalent metal cation: Asp-8, Asp-9, Ser-41, and Asn-93.

It belongs to the SurE nucleotidase family. A divalent metal cation serves as cofactor.

The protein localises to the cytoplasm. It catalyses the reaction a ribonucleoside 5'-phosphate + H2O = a ribonucleoside + phosphate. Functionally, nucleotidase that shows phosphatase activity on nucleoside 5'-monophosphates. This is 5'-nucleotidase SurE from Verminephrobacter eiseniae (strain EF01-2).